A 285-amino-acid chain; its full sequence is Pantothenate synthetase (285 aa).

ATP is bound at residue 30-37; that stretch reads MGFLHEGH. The active-site Proton donor is the histidine 37. Residue glutamine 61 participates in (R)-pantoate binding. A beta-alanine-binding site is contributed by glutamine 61. 147 to 150 is an ATP binding site; that stretch reads GQKD. (R)-pantoate is bound at residue glutamine 153. ATP is bound by residues valine 176 and 184–187; that span reads KSSR.

Belongs to the pantothenate synthetase family. As to quaternary structure, homodimer.

The protein localises to the cytoplasm. The enzyme catalyses (R)-pantoate + beta-alanine + ATP = (R)-pantothenate + AMP + diphosphate + H(+). It participates in cofactor biosynthesis; (R)-pantothenate biosynthesis; (R)-pantothenate from (R)-pantoate and beta-alanine: step 1/1. Its function is as follows. Catalyzes the condensation of pantoate with beta-alanine in an ATP-dependent reaction via a pantoyl-adenylate intermediate. The polypeptide is Pantothenate synthetase (Listeria welshimeri serovar 6b (strain ATCC 35897 / DSM 20650 / CCUG 15529 / CIP 8149 / NCTC 11857 / SLCC 5334 / V8)).